We begin with the raw amino-acid sequence, 214 residues long: Vascular endothelial growth factor A (214 aa).

Positions 1–26 (MNFLLSWVHWSLALLLYLHHAKWSQA) are cleaved as a signal peptide. 3 cysteine pairs are disulfide-bonded: Cys51–Cys93, Cys82–Cys127, and Cys86–Cys129. A glycan (N-linked (GlcNAc...) asparagine) is linked at Asn100. Residues 131–142 (PKKDRARQEKKS) show a composition bias toward basic and acidic residues. A disordered region spans residues 131-162 (PKKDRARQEKKSIRGKGKGQKRKRKKSRYKPW). The span at 143–159 (IRGKGKGQKRKRKKSRY) shows a compositional bias: basic residues.

It belongs to the PDGF/VEGF growth factor family. Homodimer; disulfide-linked. Also found as heterodimer with PGF. Interacts with NRP1. Interacts with BSG. Interacts with CD82; this interaction inhibits VEGFA-mediated signaling pathway.

Its subcellular location is the secreted. Its function is as follows. Growth factor active in angiogenesis, vasculogenesis and endothelial cell growth. Induces endothelial cell proliferation, promotes cell migration, inhibits apoptosis and induces permeabilization of blood vessels. Binds to the FLT1/VEGFR1 and KDR/VEGFR2 receptors, heparan sulfate and heparin. Binding to NRP1 receptor initiates a signaling pathway needed for motor neuron axon guidance and cell body migration, including for the caudal migration of facial motor neurons from rhombomere 4 to rhombomere 6 during embryonic development. Also binds the DEAR/FBXW7-AS1 receptor. The chain is Vascular endothelial growth factor A (VEGFA) from Canis lupus familiaris (Dog).